The sequence spans 842 residues: Glycogen phosphorylase, muscle form (842 aa).

Position 2 is an N-acetylserine (S2). A Phosphoserine; by PHK; in form phosphorylase A modification is found at S15. Residues D43 and Y76 each coordinate AMP. Y204 and Y227 each carry phosphotyrosine. 310–319 (RRFKSSKFGC) is an AMP binding site. S430 carries the phosphoserine modification. Y473 is subject to Phosphotyrosine. S514 is modified (phosphoserine). The residue at position 681 (K681) is an N6-(pyridoxal phosphate)lysine. Phosphoserine occurs at positions 747 and 748.

This sequence belongs to the glycogen phosphorylase family. Homodimer. Homotetramer; to form the enzymatically active phosphorylase A. It depends on pyridoxal 5'-phosphate as a cofactor. In terms of processing, phosphorylation of Ser-15 converts phosphorylase B (unphosphorylated) to phosphorylase A.

It carries out the reaction [(1-&gt;4)-alpha-D-glucosyl](n) + phosphate = [(1-&gt;4)-alpha-D-glucosyl](n-1) + alpha-D-glucose 1-phosphate. Its activity is regulated as follows. Allosterically regulated through the non-covalent binding of metabolites, being activated by AMP and inhibited by ATP, ADP, and glucose-6-phosphate. The activity is also controlled by post-translational modifications including phosphorylation. Allosteric enzyme that catalyzes the rate-limiting step in glycogen catabolism, the phosphorolytic cleavage of glycogen to produce glucose-1-phosphate, and plays a central role in maintaining cellular and organismal glucose homeostasis. In Macaca fascicularis (Crab-eating macaque), this protein is Glycogen phosphorylase, muscle form.